The following is a 352-amino-acid chain: Photosystem II D2 protein (352 aa).

Residues 40-60 form a helical membrane-spanning segment; the sequence is CAYLALGGWLTGTSFVTSWYT. His-117 serves as a coordination point for chlorophyll a. The helical transmembrane segment at 124 to 140 threads the bilayer; that stretch reads GFMLRQFEIARLVGVRP. Pheophytin a contacts are provided by Gln-129 and Asn-142. Residues 152 to 165 traverse the membrane as a helical segment; it reads VFVSVFLMYPLGQS. His-197 is a binding site for chlorophyll a. Residues 207–227 form a helical membrane-spanning segment; the sequence is GALLCAIHGATVENTLFEDSE. His-214 and Phe-261 together coordinate a plastoquinone. His-214 is a binding site for Fe cation. His-268 is a binding site for Fe cation. The chain crosses the membrane as a helical span at residues 278 to 294; that stretch reads GLWMSSIGIVGLALNLR.

Belongs to the reaction center PufL/M/PsbA/D family. In terms of assembly, PSII is composed of 1 copy each of membrane proteins PsbA, PsbB, PsbC, PsbD, PsbE, PsbF, PsbH, PsbI, PsbJ, PsbK, PsbL, PsbM, PsbT, PsbX, PsbY, PsbZ, Psb30/Ycf12, peripheral proteins PsbO, CyanoQ (PsbQ), PsbU, PsbV and a large number of cofactors. It forms dimeric complexes. The D1/D2 heterodimer binds P680, chlorophylls that are the primary electron donor of PSII, and subsequent electron acceptors. It shares a non-heme iron and each subunit binds pheophytin, quinone, additional chlorophylls, carotenoids and lipids. There is also a Cl(-1) ion associated with D1 and D2, which is required for oxygen evolution. The PSII complex binds additional chlorophylls, carotenoids and specific lipids. is required as a cofactor.

The protein localises to the cellular thylakoid membrane. It carries out the reaction 2 a plastoquinone + 4 hnu + 2 H2O = 2 a plastoquinol + O2. Functionally, photosystem II (PSII) is a light-driven water:plastoquinone oxidoreductase that uses light energy to abstract electrons from H(2)O, generating O(2) and a proton gradient subsequently used for ATP formation. It consists of a core antenna complex that captures photons, and an electron transfer chain that converts photonic excitation into a charge separation. The D1/D2 (PsbA/PsbD) reaction center heterodimer binds P680, the primary electron donor of PSII as well as several subsequent electron acceptors. D2 is needed for assembly of a stable PSII complex. This chain is Photosystem II D2 protein, found in Synechococcus elongatus (strain ATCC 33912 / PCC 7942 / FACHB-805) (Anacystis nidulans R2).